Consider the following 441-residue polypeptide: MGGSSISTPLDFNKIVEDVEKTLSKYPLCDHCLGRFFAKYGLGLSNRERGSSLKTMLGFKLYDDYSSKRIGRDSLLALAENAGEPLTRMVEKLFAENVNPKTCFICGGRISDEWLDSVAEAVYEKLKEASVTRFVVGVKLGRNLREKELQLVTETGFTRAESLKNEIKREVGKKVMAKYGLVPDFEKPEATAIVKLDENFNYRVELVITPVLLKGVYNKRGRNISHVPWLAKQGGRKYPLSIQEYLESRLADPFKAKKVKIHAAGREDVDARTLGPGRPLVIEIVEPLVRSYDIEDVNKLIRSDLVEVRVHKPASRRDIELLKQTSREKRKVYRLLVVSSTPISEAQLNELEAYFNDIAIQQRTPIRILTRKKDVLRVRKVYEVRTKPVSSTSFEALVYCDGGLYVKELVHCDQGRTNPCFASILNTELKPVELDVLYIEH.

The active-site Nucleophile is the Asp-268. Positions 333 and 405 each coordinate substrate.

Belongs to the pseudouridine synthase Pus10 family.

It catalyses the reaction uridine(54) in tRNA = pseudouridine(54) in tRNA. The enzyme catalyses uridine(55) in tRNA = pseudouridine(55) in tRNA. In terms of biological role, responsible for synthesis of pseudouridine from uracil-54 and uracil-55 in the psi GC loop of transfer RNAs. This chain is tRNA pseudouridine synthase Pus10, found in Thermosphaera aggregans (strain DSM 11486 / M11TL).